A 214-amino-acid polypeptide reads, in one-letter code: 3-isopropylmalate dehydratase small subunit (214 aa).

This sequence belongs to the LeuD family. LeuD type 1 subfamily. As to quaternary structure, heterodimer of LeuC and LeuD.

It carries out the reaction (2R,3S)-3-isopropylmalate = (2S)-2-isopropylmalate. Its pathway is amino-acid biosynthesis; L-leucine biosynthesis; L-leucine from 3-methyl-2-oxobutanoate: step 2/4. In terms of biological role, catalyzes the isomerization between 2-isopropylmalate and 3-isopropylmalate, via the formation of 2-isopropylmaleate. This Methylobacillus flagellatus (strain ATCC 51484 / DSM 6875 / VKM B-1610 / KT) protein is 3-isopropylmalate dehydratase small subunit.